Here is a 125-residue protein sequence, read N- to C-terminus: Ribonuclease P protein component (125 aa).

This sequence belongs to the RnpA family. In terms of assembly, consists of a catalytic RNA component (M1 or rnpB) and a protein subunit.

The catalysed reaction is Endonucleolytic cleavage of RNA, removing 5'-extranucleotides from tRNA precursor.. Its function is as follows. RNaseP catalyzes the removal of the 5'-leader sequence from pre-tRNA to produce the mature 5'-terminus. It can also cleave other RNA substrates such as 4.5S RNA. The protein component plays an auxiliary but essential role in vivo by binding to the 5'-leader sequence and broadening the substrate specificity of the ribozyme. The protein is Ribonuclease P protein component of Rhodococcus jostii (strain RHA1).